The chain runs to 1105 residues: Ran-binding protein 6 (1105 aa).

Alanine 2 carries the post-translational modification N-acetylalanine. HEAT repeat units lie at residues 219 to 257 (FKDF…TVPK), 361 to 399 (KVVL…GCHQ), 402 to 440 (ESIL…DFAP), and 444 to 483 (KKFH…DCPK). Residues 333–383 (DEMEEDDFDSNAVAAESALDRLACGLGGKVVLPMTKEHIMQMLQSPDWKYR) form a ran-GTP binding region. The stretch at 806 to 842 (KAKLEGHFKNQELRQVKRQEENYDQQVEMSLQDEDEC) forms a coiled coil. HEAT repeat units follow at residues 866–905 (LPWF…HCSP), 908–946 (FKYV…FGGD), and 949–987 (RSLC…IGKI).

Belongs to the importin beta family.

The protein resides in the cytoplasm. It is found in the nucleus. Its function is as follows. May function in nuclear protein import as nuclear transport receptor. The sequence is that of Ran-binding protein 6 (RANBP6) from Homo sapiens (Human).